The chain runs to 120 residues: U13-lycotoxin-Ls1c (120 aa).

The N-terminal stretch at 1–16 (MKILFVLISILYAVYC) is a signal peptide. A propeptide spanning residues 17-54 (FSSEEDVDSAYLANELEPVEDINSEQYAALEPKEEQER) is cleaved from the precursor. Intrachain disulfides connect cysteine 56–cysteine 70, cysteine 69–cysteine 87, and cysteine 78–cysteine 85. Residues 56 to 95 (CADMGQDRKDDCDCCLNIATCNCWFGRYFCSCTFGDYQTC) form the Agouti domain.

The protein belongs to the neurotoxin 05 (agouti) family. Post-translationally, contains 5 disulfide bonds. Expressed by the venom gland.

The protein localises to the secreted. The polypeptide is U13-lycotoxin-Ls1c (Lycosa singoriensis (Wolf spider)).